The chain runs to 101 residues: Small ribosomal subunit protein uS14 (101 aa).

Over residues M1–N10 the composition is skewed to basic and acidic residues. The interval M1–R24 is disordered. Residues N11 to R24 show a composition bias toward basic residues.

The protein belongs to the universal ribosomal protein uS14 family. As to quaternary structure, part of the 30S ribosomal subunit. Contacts proteins S3 and S10.

Functionally, binds 16S rRNA, required for the assembly of 30S particles and may also be responsible for determining the conformation of the 16S rRNA at the A site. The sequence is that of Small ribosomal subunit protein uS14 from Rhodopseudomonas palustris (strain BisB18).